Here is a 308-residue protein sequence, read N- to C-terminus: Transaldolase (308 aa).

Lys125 serves as the catalytic Schiff-base intermediate with substrate.

The protein belongs to the transaldolase family. Type 1 subfamily. Homodimer.

The protein resides in the cytoplasm. The enzyme catalyses D-sedoheptulose 7-phosphate + D-glyceraldehyde 3-phosphate = D-erythrose 4-phosphate + beta-D-fructose 6-phosphate. It functions in the pathway carbohydrate degradation; pentose phosphate pathway; D-glyceraldehyde 3-phosphate and beta-D-fructose 6-phosphate from D-ribose 5-phosphate and D-xylulose 5-phosphate (non-oxidative stage): step 2/3. Transaldolase is important for the balance of metabolites in the pentose-phosphate pathway. The protein is Transaldolase of Pseudomonas putida (strain ATCC 47054 / DSM 6125 / CFBP 8728 / NCIMB 11950 / KT2440).